Reading from the N-terminus, the 563-residue chain is MSTSPDNLFCPEQNFYGPDSEKIYIDGSLHPVKVGMRRIKLSKTYTLHGTDFSSFPLYDTSGPYSDPSVTIDLHKGLPSTRDFWQKNRTDIEVCPGKNPSPMNNRTPVRAKQGKSVTQMHYARKGIITPEMEYVAIRENQQLEEWIERFSSNGSSVKPVTPEFVRDEIAKGRAIIPANINHPELEPMAIGRNFRVKINANIGNSALASSISEEVEKSVWACRWGADTVMDLSTGKNIHQTREWILRNSPVPIGTVPIYQALEKVGGKAEELNWNIYRDTLIEQAEQGVDYFTIHSGILLDFLPAAQRRTTGIVSRGGSIIAKWCRAHKQENFLYSHFDDICDILRSYDIAISIGDALRPGSIADANDEAQFSELKTLGELTLKAWKYDVQVMIEGPGHVPLNLVEENMRKQLEYCHEAPFYTLGPLVTDIAAGYDHVNSAIGGTLLASLGCAMLCYVTPKEHLGLPDKNDVREGVIVHKLAAHAADIAKGSPSALLHDKLMSSARYSFAWNDQFNLSLDPVKTRQVHAESSQQNTGDGTDDHFCTMCGPDFCSMKKSQEVTGK.

Positions 95–115 (PGKNPSPMNNRTPVRAKQGKS) are disordered. Substrate-binding positions include asparagine 200, methionine 229, tyrosine 258, histidine 294, 314-316 (SRG), 355-358 (DALR), and glutamate 394. Histidine 398 lines the Zn(2+) pocket. Tyrosine 421 lines the substrate pocket. Histidine 462 lines the Zn(2+) pocket. Cysteine 544, cysteine 547, and cysteine 552 together coordinate [4Fe-4S] cluster.

Belongs to the ThiC family. The cofactor is [4Fe-4S] cluster.

It catalyses the reaction 5-amino-1-(5-phospho-beta-D-ribosyl)imidazole + S-adenosyl-L-methionine = 4-amino-2-methyl-5-(phosphooxymethyl)pyrimidine + CO + 5'-deoxyadenosine + formate + L-methionine + 3 H(+). Its pathway is cofactor biosynthesis; thiamine diphosphate biosynthesis. Its function is as follows. Catalyzes the synthesis of the hydroxymethylpyrimidine phosphate (HMP-P) moiety of thiamine from aminoimidazole ribotide (AIR) in a radical S-adenosyl-L-methionine (SAM)-dependent reaction. This is Phosphomethylpyrimidine synthase from Chlorobium phaeobacteroides (strain BS1).